The primary structure comprises 198 residues: Small ribosomal subunit protein uS7 (198 aa).

It belongs to the universal ribosomal protein uS7 family. As to quaternary structure, part of the 30S ribosomal subunit.

In terms of biological role, one of the primary rRNA binding proteins, it binds directly to 16S rRNA where it nucleates assembly of the head domain of the 30S subunit. Is located at the subunit interface close to the decoding center. This chain is Small ribosomal subunit protein uS7, found in Desulfurococcus mucosus (Desulfurococcus mobilis).